The sequence spans 241 residues: Polycomb group RING finger protein 3 (241 aa).

The segment at 17–56 (CRLCSGYLIDATTVTECLHTFCRSCLVKYLEENNTCPTCR) adopts an RING-type zinc-finger fold. The interval 115–148 (AKQHLDPRNGETKADDNSNKETAEEKQEEDNDYH) is disordered. The segment covering 117-139 (QHLDPRNGETKADDNSNKETAEE) has biased composition (basic and acidic residues). The tract at residues 131 to 241 (NSNKETAEEK…LHYRPKMDLL (111 aa)) is interaction with BCORL1.

As to quaternary structure, component of a PRC1-like complex that contains PCGF3, RNF2 and RYBP. Interacts with RNF2. Interacts with CBX6, CBX7 and CBX8. Interacts with BCORL1.

It localises to the nucleus. The protein resides in the nucleoplasm. Functionally, component of a Polycomb group (PcG) multiprotein PRC1-like complex, a complex class required to maintain the transcriptionally repressive state of many genes, including Hox genes, throughout development. PcG PRC1 complex acts via chromatin remodeling and modification of histones; it mediates monoubiquitination of histone H2A 'Lys-119', rendering chromatin heritably changed in its expressibility. Within the PRC1-like complex, regulates RNF2 ubiquitin ligase activity. Plays a redundant role with PCGF5 as part of a PRC1-like complex that mediates monoubiquitination of histone H2A 'Lys-119' on the X chromosome and is required for normal silencing of one copy of the X chromosome in XX females. The protein is Polycomb group RING finger protein 3 (PcgF3) of Mus musculus (Mouse).